We begin with the raw amino-acid sequence, 754 residues long: DNA topoisomerase 4 subunit A (754 aa).

The region spanning 38–501 is the Topo IIA-type catalytic domain; that stretch reads LPHIGDGLKP…EARALSETEL (464 aa). The O-(5'-phospho-DNA)-tyrosine intermediate role is filled by Tyr127.

The protein belongs to the type II topoisomerase GyrA/ParC subunit family. ParC type 1 subfamily. As to quaternary structure, heterotetramer composed of ParC and ParE.

The protein localises to the cell membrane. It catalyses the reaction ATP-dependent breakage, passage and rejoining of double-stranded DNA.. Functionally, topoisomerase IV is essential for chromosome segregation. It relaxes supercoiled DNA. Performs the decatenation events required during the replication of a circular DNA molecule. This chain is DNA topoisomerase 4 subunit A, found in Pseudomonas aeruginosa (strain ATCC 15692 / DSM 22644 / CIP 104116 / JCM 14847 / LMG 12228 / 1C / PRS 101 / PAO1).